The chain runs to 428 residues: Succinyl-CoA--L-malate CoA-transferase alpha subunit (428 aa).

The tract at residues 1-31 (MPPTGEEPSGHAESKPPASDPMSTPGTGQEQ) is disordered. Residues 21–31 (PMSTPGTGQEQ) are compositionally biased toward polar residues. Aspartate 200 (nucleophile) is an active-site residue.

This sequence belongs to the CoA-transferase III family. As to quaternary structure, forms a large complex composed of six heterodimers (alpha, beta).

It catalyses the reaction succinyl-CoA + (S)-malate = (S)-malyl-CoA + succinate. The catalysed reaction is (3S)-citramalate + succinyl-CoA = (3S)-citramalyl-CoA + succinate. Involved in the 3-hydroxypropionate cycle used for autotrophic carbon dioxide fixation. Catalyzes the transfer of CoA moiety from succinyl-CoA to L-malate to yield L-malyl-CoA. It is highly specific for succinyl-CoA as the CoA donor, however it can accept L-citramalate instead of L-malate as the CoA acceptor. In Chloroflexus aurantiacus, this protein is Succinyl-CoA--L-malate CoA-transferase alpha subunit (smtA).